Here is a 107-residue protein sequence, read N- to C-terminus: Nucleoid-associated protein Lferr_1592 (107 aa).

The protein belongs to the YbaB/EbfC family. Homodimer.

It is found in the cytoplasm. It localises to the nucleoid. Binds to DNA and alters its conformation. May be involved in regulation of gene expression, nucleoid organization and DNA protection. This is Nucleoid-associated protein Lferr_1592 from Acidithiobacillus ferrooxidans (strain ATCC 53993 / BNL-5-31) (Leptospirillum ferrooxidans (ATCC 53993)).